A 305-amino-acid polypeptide reads, in one-letter code: Maximins-S type B/C (305 aa).

A signal peptide spans 1–18 (MNFNYFILVLFFITSGHA). 2 consecutive propeptides follow at residues 19–35 (KSET…HIKR) and 52–65 (SAEE…LVTR). Asn-83 carries the asparagine amide modification. A propeptide spanning residues 87-100 (SAEEQDLAEHLVTR) is cleaved from the precursor. The residue at position 118 (Asn-118) is an Asparagine amide. Residues 122–135 (SAEEQDLAEDLVTR) constitute a propeptide that is removed on maturation. Lys-153 bears the Lysine amide mark. A propeptide spanning residues 157-170 (SAEDQDLAEDLVTR) is cleaved from the precursor. Asn-188 carries the post-translational modification Asparagine amide. Positions 192-205 (SAEEQDLAEHLVTR) are excised as a propeptide. Asn-223 bears the Asparagine amide mark. Residues 227–240 (SAEEQDLSEDLVTR) constitute a propeptide that is removed on maturation. At Asn-258 the chain carries Asparagine amide. Positions 262 to 275 (SAEEQDLVEDLVTR) are excised as a propeptide. Lys-293 bears the Lysine amide mark. Residues 297–305 (SAEQEKDMK) constitute a propeptide that is removed on maturation.

Belongs to the maximin-S family. As to expression, expressed by the skin dorsal glands.

The protein resides in the secreted. Functionally, maximin-S1 has no antimicrobial activity. Has no hemolytic activity. Its function is as follows. Maximin-S2 has an activity against mycoplasma but has no activity against common Gram-positive and Gram-negative bacteria nor fungi. Has no hemolytic activity. Maximin-S3 has an activity against mycoplasma but has no activity against common Gram-positive and Gram-negative bacteria nor fungi. Has no hemolytic activity. In terms of biological role, maximin-S4 has an activity against mycoplasma but has no activity against common Gram-positive and Gram-negative bacteria nor fungi. Has no hemolytic activity. Functionally, maximin-S5 has an activity against mycoplasma but has no activity against common Gram-positive and Gram-negative bacteria nor fungi. Has no hemolytic activity. This is Maximins-S type B/C from Bombina maxima (Giant fire-bellied toad).